We begin with the raw amino-acid sequence, 861 residues long: Benzylsuccinate synthase alpha subunit (861 aa).

The 673-residue stretch at 40 to 712 (TERTRRLKAR…QAVGLYMEVG (673 aa)) folds into the PFL domain. The disordered stretch occupies residues 718-744 (TPDGRFGGEAADDGGISPYSGTDKKGP). In terms of domain architecture, Glycine radical spans 731–850 (GGISPYSGTD…IIARNEQNFN (120 aa)). Glycine radical is present on G825.

The protein belongs to the glycyl radical enzyme (GRE) family. BSS subfamily. Heterohexamer composed of 2 alpha subunits, 2 beta subunits and 2 gamma subunits.

It carries out the reaction toluene + fumarate = 2-benzylsuccinate. Its pathway is xenobiotic degradation; toluene degradation. Activated by the benzylsuccinate synthase activating enzyme BssD. Rapidly inactivated by oxygen. Its function is as follows. Catalyzes the addition of fumarate to the methyl group of toluene, leading to the formation of benzylsuccinate. In Thauera aromatica, this protein is Benzylsuccinate synthase alpha subunit (bssA).